Here is a 625-residue protein sequence, read N- to C-terminus: tRNA uridine 5-carboxymethylaminomethyl modification enzyme MnmG (625 aa).

14 to 19 (GAGHAG) provides a ligand contact to FAD. 273 to 287 (GPRYCPSIEDKIVRF) contacts NAD(+).

Belongs to the MnmG family. Homodimer. Heterotetramer of two MnmE and two MnmG subunits. FAD serves as cofactor.

It localises to the cytoplasm. NAD-binding protein involved in the addition of a carboxymethylaminomethyl (cmnm) group at the wobble position (U34) of certain tRNAs, forming tRNA-cmnm(5)s(2)U34. This chain is tRNA uridine 5-carboxymethylaminomethyl modification enzyme MnmG, found in Clostridium botulinum (strain Loch Maree / Type A3).